Reading from the N-terminus, the 457-residue chain is Phosphomethylpyrimidine synthase (457 aa).

Residues asparagine 88, methionine 117, tyrosine 146, histidine 182, 204–206 (SRG), 245–248 (DACR), and glutamate 284 each bind substrate. Residue histidine 288 coordinates Zn(2+). Tyrosine 311 contributes to the substrate binding site. Zn(2+) is bound at residue histidine 352. [4Fe-4S] cluster contacts are provided by cysteine 428, cysteine 431, and cysteine 435.

Belongs to the ThiC family. It depends on [4Fe-4S] cluster as a cofactor.

It catalyses the reaction 5-amino-1-(5-phospho-beta-D-ribosyl)imidazole + S-adenosyl-L-methionine = 4-amino-2-methyl-5-(phosphooxymethyl)pyrimidine + CO + 5'-deoxyadenosine + formate + L-methionine + 3 H(+). It participates in cofactor biosynthesis; thiamine diphosphate biosynthesis. Its function is as follows. Catalyzes the synthesis of the hydroxymethylpyrimidine phosphate (HMP-P) moiety of thiamine from aminoimidazole ribotide (AIR) in a radical S-adenosyl-L-methionine (SAM)-dependent reaction. This Clostridium tetani (strain Massachusetts / E88) protein is Phosphomethylpyrimidine synthase.